We begin with the raw amino-acid sequence, 375 residues long: 4-hydroxy-3-methylbut-2-en-1-yl diphosphate synthase (flavodoxin) (375 aa).

Positions 270, 273, 305, and 312 each coordinate [4Fe-4S] cluster.

It belongs to the IspG family. Requires [4Fe-4S] cluster as cofactor.

The enzyme catalyses (2E)-4-hydroxy-3-methylbut-2-enyl diphosphate + oxidized [flavodoxin] + H2O + 2 H(+) = 2-C-methyl-D-erythritol 2,4-cyclic diphosphate + reduced [flavodoxin]. It functions in the pathway isoprenoid biosynthesis; isopentenyl diphosphate biosynthesis via DXP pathway; isopentenyl diphosphate from 1-deoxy-D-xylulose 5-phosphate: step 5/6. Its function is as follows. Converts 2C-methyl-D-erythritol 2,4-cyclodiphosphate (ME-2,4cPP) into 1-hydroxy-2-methyl-2-(E)-butenyl 4-diphosphate. The protein is 4-hydroxy-3-methylbut-2-en-1-yl diphosphate synthase (flavodoxin) of Yersinia pseudotuberculosis serotype IB (strain PB1/+).